The primary structure comprises 420 residues: Gamma-glutamyl phosphate reductase (420 aa).

Belongs to the gamma-glutamyl phosphate reductase family.

Its subcellular location is the cytoplasm. The catalysed reaction is L-glutamate 5-semialdehyde + phosphate + NADP(+) = L-glutamyl 5-phosphate + NADPH + H(+). The protein operates within amino-acid biosynthesis; L-proline biosynthesis; L-glutamate 5-semialdehyde from L-glutamate: step 2/2. Catalyzes the NADPH-dependent reduction of L-glutamate 5-phosphate into L-glutamate 5-semialdehyde and phosphate. The product spontaneously undergoes cyclization to form 1-pyrroline-5-carboxylate. In Streptococcus pneumoniae (strain JJA), this protein is Gamma-glutamyl phosphate reductase.